The primary structure comprises 47 residues: Large ribosomal subunit protein eL40 (47 aa).

It belongs to the eukaryotic ribosomal protein eL40 family.

This is Large ribosomal subunit protein eL40 from Methanococcus aeolicus (strain ATCC BAA-1280 / DSM 17508 / OCM 812 / Nankai-3).